The sequence spans 135 residues: Adult cuticle protein 1 (135 aa).

Residues 1–19 (MKFAVAVIFTLALAMGVQS) form the signal peptide. A run of 3 repeats spans residues 72–75 (AAPA), 78–81 (AAPA), and 128–131 (AAPA).

In terms of tissue distribution, detected in the epidermis underlying the head and thorax (including legs and wings), but not in the abdominal epidermis of newly eclosed flies.

In terms of biological role, component of the cuticle of the adult fruit fly. Could be involved in thickening of the hard adult cuticle. This chain is Adult cuticle protein 1 (Acp1), found in Drosophila melanogaster (Fruit fly).